We begin with the raw amino-acid sequence, 278 residues long: 2-heptyl-3-hydroxy-4-quinolone dioxygenase AqdC1 (278 aa).

In terms of domain architecture, AB hydrolase-1 spans 29–158 (PTIVMLPGWC…GWVDSCRALF (130 aa)). His103 contributes to the substrate binding site. The active-site Proton donor/acceptor is the His250.

It belongs to the AB hydrolase superfamily.

It carries out the reaction 2-heptyl-3-hydroxy-4(1H)-quinolone + O2 = N-octanoylanthranilate + CO + H(+). Its function is as follows. Involved in the degradation of the Pseudomonas aeruginosa quorum sensing signal molecules HHQ (2-heptyl-4-quinolone) and PQS (2-heptyl-3-hydroxy-4-quinolone) to anthranilic acid. Catalyzes the cleavage of PQS to form N-octanoylanthranilic acid and carbon monoxide. The polypeptide is 2-heptyl-3-hydroxy-4-quinolone dioxygenase AqdC1 (Rhodococcus erythropolis (Arthrobacter picolinophilus)).